The sequence spans 334 residues: Malate dehydrogenase, cytoplasmic (334 aa).

An N-acetylserine modification is found at serine 2. NAD(+) contacts are provided by residues 11-17 (GAAGQIA) and aspartate 42. Residues arginine 92 and arginine 98 each contribute to the substrate site. Asparagine 105 is an NAD(+) binding site. N6-succinyllysine is present on lysine 110. Residue glutamine 112 coordinates NAD(+). N6-acetyllysine occurs at positions 118 and 121. 129 to 131 (VGN) provides a ligand contact to NAD(+). Residues asparagine 131 and arginine 162 each contribute to the substrate site. Histidine 187 functions as the Proton acceptor in the catalytic mechanism. Lysine 214 is subject to N6-succinyllysine. Phosphoserine is present on serine 217. At arginine 230 the chain carries Omega-N-methylarginine. Serine 241 bears the Phosphoserine mark. An N6-acetyllysine; alternate modification is found at lysine 298. Lysine 298 is subject to N6-succinyllysine; alternate. Phosphoserine is present on serine 309. Lysine 318 carries the N6-succinyllysine modification. Phosphoserine is present on residues serine 332 and serine 333.

The protein belongs to the LDH/MDH superfamily. MDH type 2 family. In terms of assembly, homodimer. Post-translationally, ISGylated. Acetylation at Lys-118 dramatically enhances enzymatic activity and promotes adipogenic differentiation.

The protein resides in the cytoplasm. The protein localises to the cytosol. The catalysed reaction is (S)-malate + NAD(+) = oxaloacetate + NADH + H(+). It carries out the reaction (2R)-2-hydroxy-3-(4-hydroxyphenyl)propanoate + NAD(+) = 3-(4-hydroxyphenyl)pyruvate + NADH + H(+). It catalyses the reaction (S)-2-hydroxyglutarate + NAD(+) = 2-oxoglutarate + NADH + H(+). Functionally, catalyzes the reduction of aromatic alpha-keto acids in the presence of NADH. Plays essential roles in the malate-aspartate shuttle and the tricarboxylic acid cycle, important in mitochondrial NADH supply for oxidative phosphorylation. Catalyzes the reduction of 2-oxoglutarate to 2-hydroxyglutarate, leading to elevated reactive oxygen species (ROS). The chain is Malate dehydrogenase, cytoplasmic (Mdh1) from Rattus norvegicus (Rat).